We begin with the raw amino-acid sequence, 172 residues long: Shikimate kinase (172 aa).

11 to 16 serves as a coordination point for ATP; the sequence is GSGKTT. Mg(2+) is bound at residue Thr-15. Substrate contacts are provided by Asp-33, Arg-57, and Gly-79. Arg-117 contacts ATP. Residue Arg-136 participates in substrate binding.

The protein belongs to the shikimate kinase family. As to quaternary structure, monomer. The cofactor is Mg(2+).

The protein localises to the cytoplasm. It catalyses the reaction shikimate + ATP = 3-phosphoshikimate + ADP + H(+). It functions in the pathway metabolic intermediate biosynthesis; chorismate biosynthesis; chorismate from D-erythrose 4-phosphate and phosphoenolpyruvate: step 5/7. Its function is as follows. Catalyzes the specific phosphorylation of the 3-hydroxyl group of shikimic acid using ATP as a cosubstrate. The sequence is that of Shikimate kinase from Caldicellulosiruptor bescii (strain ATCC BAA-1888 / DSM 6725 / KCTC 15123 / Z-1320) (Anaerocellum thermophilum).